Here is a 256-residue protein sequence, read N- to C-terminus: Transmembrane protein 187 (256 aa).

7 consecutive transmembrane segments (helical) span residues 8–28, 51–71, 94–112, 119–139, 146–168, 193–213, and 233–253; these read ALFH…TGIF, FLAM…GVYW, VFAG…RIGM, VLDQ…CLCL, WLFL…HPHG, NISS…FVVL, and FWSK…LTSL.

Its subcellular location is the membrane. This chain is Transmembrane protein 187 (TMEM187), found in Bos taurus (Bovine).